The sequence spans 296 residues: Enoyl-CoA hydratase AFT3-1 (296 aa).

Positions 294–296 match the Peroxisomal targeting signal type 1 motif; that stretch reads PKL.

It belongs to the enoyl-CoA hydratase/isomerase family.

It is found in the peroxisome. The enzyme catalyses a (3S)-3-hydroxyacyl-CoA = a (2E)-enoyl-CoA + H2O. The catalysed reaction is a 4-saturated-(3S)-3-hydroxyacyl-CoA = a (3E)-enoyl-CoA + H2O. It participates in mycotoxin biosynthesis. Enoyl-CoA hydratase; part of the gene clusters that mediate the biosynthesis of the host-selective toxins (HSTs) AF-toxins responsible for Alternaria black spot of strawberry disease by the strawberry pathotype. AF-toxin I and III are valine derivatives of 2,3-dyhydroxy-isovaleric acid and 2-hydroxy-isovaleric acid respectively, while AF II is an isoleucine derivative of 2-hydroxy-valeric acid. These derivatives are bound to a 9,10-epoxy-8-hydroxy-9-methyl-decatrienoic acid (EDA) moiety. On cellular level, AF-toxins affect plasma membrane of susceptible cells and cause a sudden increase in loss of K(+) after a few minutes of toxin treatment. The aldo-keto reductase AFTS1 catalyzes the conversion of 2-keto-isovaleric acid (2-KIV) to 2-hydroxy-isovaleric acid (2-HIV) by reduction of its ketone to an alcohol. The acyl-CoA ligase AFT1, the hydrolase AFT2 and the enoyl-CoA hydratases AFT3 and AFT6, but also the polyketide synthase AFT9, the acyl-CoA dehydrogenase AFT10, the cytochrome P450 monooxygenase AFT11 and the oxidoreductase AFT12 are all involved in the biosynthesis of the AK-, AF- and ACT-toxin common EDA structural moiety. The exact function of each enzyme, and of additional enzymes identified within the AF-toxin clusters have still to be determined. This Alternaria alternata (Alternaria rot fungus) protein is Enoyl-CoA hydratase AFT3-1 (AFT3-1).